A 202-amino-acid polypeptide reads, in one-letter code: Neurensin-2 (202 aa).

Helical transmembrane passes span 65-85 (VAVA…GYAV) and 116-136 (VVGA…LFLI). A disordered region spans residues 162–202 (RDEPEKLSPAFHETSSQSPFLTPPSPFGQQSVQTSQPQRDL). Polar residues predominate over residues 188 to 202 (FGQQSVQTSQPQRDL).

Belongs to the VMP family. As to expression, expressed specifically in brain where it is widely expressed, with highest levels of expression in thalamus and hypothalamus. In brain, found in neural cell bodies and detected in many regions of the limbic system, such as the septum nucleus, horizontal and vertical limbs of the diagonal band, hippocampus, amygdaloid nucleus, and habernula nucleus. Also localizes to small vesicles found in the perinuclear region of Neuro2a and PC12 cells.

The protein localises to the membrane. Functionally, may play a role in maintenance and/or transport of vesicles. This Mus musculus (Mouse) protein is Neurensin-2.